Reading from the N-terminus, the 327-residue chain is tRNA N6-adenosine threonylcarbamoyltransferase (327 aa).

Positions 107 and 111 each coordinate Fe cation. Residues 129 to 133 (LVSGG), Asp-162, Gly-175, and Asn-263 contribute to the substrate site. Residue Asp-291 participates in Fe cation binding.

It belongs to the KAE1 / TsaD family. The cofactor is Fe(2+).

Its subcellular location is the cytoplasm. The enzyme catalyses L-threonylcarbamoyladenylate + adenosine(37) in tRNA = N(6)-L-threonylcarbamoyladenosine(37) in tRNA + AMP + H(+). In terms of biological role, required for the formation of a threonylcarbamoyl group on adenosine at position 37 (t(6)A37) in tRNAs that read codons beginning with adenine. Is involved in the transfer of the threonylcarbamoyl moiety of threonylcarbamoyl-AMP (TC-AMP) to the N6 group of A37, together with TsaE and TsaB. TsaD likely plays a direct catalytic role in this reaction. This Nautilia profundicola (strain ATCC BAA-1463 / DSM 18972 / AmH) protein is tRNA N6-adenosine threonylcarbamoyltransferase.